The following is a 163-amino-acid chain: Adenosine 5'-monophosphoramidase HINT2 (163 aa).

A mitochondrion-targeting transit peptide spans 1 to 17 (MAAAVLLAVGLRAARRT). An N6-succinyllysine modification is found at K45. The region spanning 55-163 (IFSRILDRSL…GGRQLQWPPG (109 aa)) is the HIT domain. S63 and D80 together coordinate AMP. At K119 the chain carries N6-acetyllysine. Residue K128 is modified to N6-acetyllysine; alternate. An N6-succinyllysine; alternate modification is found at K128. Residue N136 coordinates AMP. K139 is modified (N6-acetyllysine). AMP is bound by residues 142-145 (AQSV) and 149-151 (HIH). A Histidine triad motif motif is present at residues 147–151 (HLHIH). H149 serves as the catalytic Tele-AMP-histidine intermediate.

It belongs to the HINT family.

Its subcellular location is the mitochondrion. It carries out the reaction adenosine 5'-phosphoramidate + H2O = AMP + NH4(+). Its function is as follows. Exhibits adenosine 5'-monophosphoramidase activity, hydrolyzing purine nucleotide phosphoramidates with a single phosphate group such as adenosine 5'monophosphoramidate (AMP-NH2) to yield AMP and NH2. Hydrolyzes adenosine 5'-O-p-nitrophenylphosphoramidate (AMP-pNA). May be involved in steroid biosynthesis. May play a role in apoptosis. This Mus musculus (Mouse) protein is Adenosine 5'-monophosphoramidase HINT2.